We begin with the raw amino-acid sequence, 373 residues long: Glutamine synthetase (373 aa).

The residue at position 2 (Ala2) is an N-acetylalanine. Residues 2–25 (ATSASSHLNKGIKQMYMNLPQGEK) are required for glutamine-induced ubiquitination by CRL4(CRBN) and proteasomal degradation. N6-acetyllysine is present on residues Lys11 and Lys14. Positions 24-106 (EKIQLMYIWV…VFCEVFKYNR (83 aa)) constitute a GS beta-grasp domain. Tyr104 carries the post-translational modification Phosphotyrosine. Positions 113–373 (LRHSCKRIMD…TGDEPFQYKN (261 aa)) constitute a GS catalytic domain. Glu134 provides a ligand contact to ATP. Mn(2+) is bound by residues Glu134, Glu136, Glu196, and Glu203. 203–208 (EFQIGP) lines the ATP pocket. 246 to 247 (NW) contributes to the L-glutamate binding site. His253 is a binding site for Mn(2+). ATP contacts are provided by residues 255 to 257 (NFS), Arg319, and Arg324. An L-glutamate-binding site is contributed by Arg319. Residue 336–338 (YFE) participates in ADP binding. Glu338 is a binding site for Mn(2+). Arg340 is a binding site for L-glutamate. Ser343 is modified (phosphoserine).

This sequence belongs to the glutamine synthetase family. As to quaternary structure, decamer; composed of two pentamers. Interacts with PALMD. Interacts with RHOJ. Interacts with BEST2; this interaction tethers a fraction of GLUL to the membrane, causing a decrease of cytosolic glutamine synthase (GS) activity and inhibits the chloride channel activity of BEST2 by affecting the gating at the aperture in the absence of intracellular glutamate. It depends on Mg(2+) as a cofactor. Mn(2+) serves as cofactor. Post-translationally, palmitoylated; undergoes autopalmitoylation. Acetylated by EP300/p300; acetylation is stimulated by increased glutamine levels and promotes ubiquitin-mediated proteasomal degradation. In terms of processing, ubiquitinated by ZNRF1. Ubiquitinated by the DCX (DDB1-CUL4-X-box) E3 ubiquitin-protein ligase complex called CRL4(CRBN), leading to proteasomal degradation. In terms of tissue distribution, in the adult liver, expression is restricted to a small population of hepatocytes which form only a small rim of one to three hepatocytes around the central veins. Expressed in lung microvascular endothelial cells.

It localises to the cytoplasm. Its subcellular location is the cytosol. The protein localises to the microsome. The protein resides in the mitochondrion. It is found in the cell membrane. The catalysed reaction is L-glutamate + NH4(+) + ATP = L-glutamine + ADP + phosphate + H(+). It catalyses the reaction L-cysteinyl-[protein] + hexadecanoyl-CoA = S-hexadecanoyl-L-cysteinyl-[protein] + CoA. Glutamine synthetase activity is inhibited by methionine sulfoximine (MSO). Glutamine synthetase that catalyzes the ATP-dependent conversion of glutamate and ammonia to glutamine. Its role depends on tissue localization: in the brain, it regulates the levels of toxic ammonia and converts neurotoxic glutamate to harmless glutamine, whereas in the liver, it is one of the enzymes responsible for the removal of ammonia. Plays a key role in ammonium detoxification during erythropoiesis: the glutamine synthetase activity is required to remove ammonium generated by porphobilinogen deaminase (HMBS) during heme biosynthesis to prevent ammonium accumulation and oxidative stress. Essential for proliferation of fetal skin fibroblasts. Independently of its glutamine synthetase activity, required for endothelial cell migration during vascular development. Involved in angiogenesis by regulating membrane localization and activation of the GTPase RHOJ, possibly by promoting RHOJ palmitoylation. May act as a palmitoyltransferase for RHOJ: able to autopalmitoylate and then transfer the palmitoyl group to RHOJ. Plays a role in ribosomal 40S subunit biogenesis. Through the interaction with BEST2, inhibits BEST2 channel activity by affecting the gating at the aperture in the absence of intracellular L-glutamate, but sensitizes BEST2 to intracellular L-glutamate, which promotes the opening of BEST2 and thus relieves its inhibitory effect on BEST2. In Rattus norvegicus (Rat), this protein is Glutamine synthetase.